A 128-amino-acid polypeptide reads, in one-letter code: Type-4 ice-structuring protein LS-12 (128 aa).

The N-terminal stretch at 1–20 (MKFSLVATIVLLALAQGSFA) is a signal peptide. Gln-21 bears the Pyrrolidone carboxylic acid mark.

It belongs to the apolipoprotein A1/A4/E family.

It is found in the secreted. Functionally, antifreeze proteins lower the blood freezing point. The polypeptide is Type-4 ice-structuring protein LS-12 (Myoxocephalus octodecemspinosus (Longhorn sculpin)).